Consider the following 269-residue polypeptide: tRNA pseudouridine synthase A (269 aa).

The active-site Nucleophile is D55. Y111 provides a ligand contact to substrate.

The protein belongs to the tRNA pseudouridine synthase TruA family.

The catalysed reaction is uridine(38/39/40) in tRNA = pseudouridine(38/39/40) in tRNA. Its function is as follows. Formation of pseudouridine at positions 38, 39 and 40 in the anticodon stem and loop of transfer RNAs. This is tRNA pseudouridine synthase A from Methanosarcina acetivorans (strain ATCC 35395 / DSM 2834 / JCM 12185 / C2A).